The sequence spans 469 residues: MFNGRPFPVDAFPKIIRNAIYEVEQHTQAPQGLIAASALGVISLACQNRIDVCRLNNLRGPVSLFLMTLAESGERKSTVDKLLMKPLYQLEEDLFEKYTHDLTAWRNDEAIFNIEKKALMSKLKSDIRRNKDHLATNERLKELLTTNPKAPVRFKFLFNDATPAAIKAHLCGHWRSVGIMSDEAGIIFNGYTLNELPFINKMWDGSIFTVERKNEPEKLIRDARITLSLMVQPNVFKGYIDRKGDMAKGIGFFARCLMCQPASTQGNRKISNPIFSNEHLPVFHQRLMEIVNESIIKINENNRICLRFSAEAERHWIEFYNQVESEMRMIGLLYDFKDYASKMAENMARLAALLHYFSGDGGDISVTAVKAAVEIVAWYIEEYIRLFSKKEEFSLDVSEADELYCWIKDYCTQKFSSCIKKNIILQFGPNKFRNRDKANELIRILISQNKIFISSWGKTKIINITHCVF.

The sequence is that of Protein YfjI (yfjI) from Escherichia coli (strain K12).